The primary structure comprises 181 residues: ATP-dependent protease subunit HslV (181 aa).

T7 is an active-site residue. Positions 166, 169, and 172 each coordinate Na(+).

This sequence belongs to the peptidase T1B family. HslV subfamily. In terms of assembly, a double ring-shaped homohexamer of HslV is capped on each side by a ring-shaped HslU homohexamer. The assembly of the HslU/HslV complex is dependent on binding of ATP.

It localises to the cytoplasm. It catalyses the reaction ATP-dependent cleavage of peptide bonds with broad specificity.. Its activity is regulated as follows. Allosterically activated by HslU binding. Its function is as follows. Protease subunit of a proteasome-like degradation complex believed to be a general protein degrading machinery. The polypeptide is ATP-dependent protease subunit HslV (Delftia acidovorans (strain DSM 14801 / SPH-1)).